An 882-amino-acid chain; its full sequence is Putative HTH-type transcriptional regulator Rv0890c (882 aa).

An HTH luxR-type domain is found at 814 to 879; that stretch reads PARGWGSLTP…QLVDEAARRG (66 aa). The segment at residues 838–857 is a DNA-binding region (H-T-H motif); it reads NKDIAKRLFVSPRTVQTHLT.

The chain is Putative HTH-type transcriptional regulator Rv0890c from Mycobacterium tuberculosis (strain ATCC 25618 / H37Rv).